A 435-amino-acid polypeptide reads, in one-letter code: 3-phosphoshikimate 1-carboxyvinyltransferase (435 aa).

Residues Lys-22, Ser-23, and Arg-27 each contribute to the 3-phosphoshikimate site. Lys-22 lines the phosphoenolpyruvate pocket. 2 residues coordinate phosphoenolpyruvate: Gly-94 and Arg-122. Ser-166, Gln-168, Asp-314, and Lys-341 together coordinate 3-phosphoshikimate. Gln-168 provides a ligand contact to phosphoenolpyruvate. The active-site Proton acceptor is the Asp-314. Residues Arg-345 and Arg-388 each contribute to the phosphoenolpyruvate site.

This sequence belongs to the EPSP synthase family. As to quaternary structure, monomer.

The protein localises to the cytoplasm. It carries out the reaction 3-phosphoshikimate + phosphoenolpyruvate = 5-O-(1-carboxyvinyl)-3-phosphoshikimate + phosphate. It participates in metabolic intermediate biosynthesis; chorismate biosynthesis; chorismate from D-erythrose 4-phosphate and phosphoenolpyruvate: step 6/7. Catalyzes the transfer of the enolpyruvyl moiety of phosphoenolpyruvate (PEP) to the 5-hydroxyl of shikimate-3-phosphate (S3P) to produce enolpyruvyl shikimate-3-phosphate and inorganic phosphate. The sequence is that of 3-phosphoshikimate 1-carboxyvinyltransferase from Ruthia magnifica subsp. Calyptogena magnifica.